Here is a 337-residue protein sequence, read N- to C-terminus: Transmembrane protein 120B (337 aa).

The stretch at methionine 1–alanine 39 forms a coiled coil. Transmembrane regions (helical) follow at residues glycine 100–alanine 122, phenylalanine 130–asparagine 150, isoleucine 157–isoleucine 175, glycine 185–proline 205, phenylalanine 268–phenylalanine 288, and glutamine 300–leucine 320.

Belongs to the TMEM120 family.

The protein resides in the nucleus inner membrane. Necessary for efficient adipogenesis. Does not show ion channel activity. This is Transmembrane protein 120B (tmem120b) from Danio rerio (Zebrafish).